The following is a 461-amino-acid chain: Protein-serine O-palmitoleoyltransferase porcupine (461 aa).

Topologically, residues 1–17 are cytoplasmic; it reads MATFSRQEFFQQLLQGC. Residues 18–38 traverse the membrane as a helical segment; it reads LLPTAQQGLDQIWLLLAICLA. The Extracellular portion of the chain corresponds to 39–66; it reads CRLLWRLGLPSYLKHASTVAGGFFSLYH. A helical membrane pass occupies residues 67 to 87; sequence FFQLHMVWVVLLSLLCYLVLF. Topologically, residues 88 to 95 are cytoplasmic; it reads LCRHSSHR. A helical transmembrane segment spans residues 96–116; the sequence is GVFLSVTILIYLLMGEMHMVD. Residues 117-152 lie on the Extracellular side of the membrane; it reads TVTWHKMRGAQMIVAMKAVSLGFDLDRGEVGTVPSP. Residues 153-173 traverse the membrane as a helical segment; sequence VEFMGYLYFVGTIVFGPWISF. The Cytoplasmic portion of the chain corresponds to 174-198; it reads HSYLQAVQGRPLSCRWLQKVARSLA. C187 carries S-palmitoyl cysteine lipidation. A helical membrane pass occupies residues 199-219; sequence LALLCLVLSTCVGPYLFPYFI. Residues 220-252 are Extracellular-facing; the sequence is PLNGDRLLRNKKRKARGTMVRWLRAYESAVSFH. The helical transmembrane segment at 253–273 threads the bilayer; it reads FSNYFVGFLSEATATLAGAGF. Residues 274 to 337 lie on the Cytoplasmic side of the membrane; the sequence is TEEKDHLEWD…SAVLVTYAAS (64 aa). The helical transmembrane segment at 338–358 threads the bilayer; sequence ALLHGFSFHLAAVLLSLAFIT. The active site involves H341. The Extracellular segment spans residues 359–396; it reads YVEHVLRKRLARILSACVLSKRCPPDCSHQHRLGLGVR. Residues 397 to 417 traverse the membrane as a helical segment; sequence ALNLLFGALAIFHLAYLGSLF. The Cytoplasmic portion of the chain corresponds to 418–461; the sequence is DVDVDDTTEEQGYGMAYTVHKWSELSWASHWVTFGCWIFYRLIG.

It belongs to the membrane-bound acyltransferase family. Porcupine subfamily. Interacts with WNT1, WNT3, WNT3A, WNT4, WNT5A, WNT5B, WNT6, WNT7A and WNT7B. As to expression, isoform 1 is expressed in fetal brain, brain, amygdala, caudate nucleus, cerebellum, hippocampus, pituitary, thalamus, heart, skeletal muscle and testis. Isoform 4 is expressed in amygdala, corpus callosum, hippocampus, spinal cord, kidney, liver, lung, spleen, uterus, testis. Isoform 2 and isoform 3 are expressed in substantia negra, spinal cord, heart and lung.

It is found in the endoplasmic reticulum membrane. The catalysed reaction is [Wnt protein]-L-serine + (9Z)-hexadecenoyl-CoA = [Wnt protein]-O-(9Z)-hexadecenoyl-L-serine + CoA. Protein-serine O-palmitoleoyltransferase that acts as a key regulator of the Wnt signaling pathway by mediating the attachment of palmitoleate, a 16-carbon monounsaturated fatty acid (C16:1(9Z)), to Wnt proteins. Serine palmitoleoylation of WNT proteins is required for efficient binding to frizzled receptors. The sequence is that of Protein-serine O-palmitoleoyltransferase porcupine from Homo sapiens (Human).